Reading from the N-terminus, the 240-residue chain is LexA repressor (240 aa).

Positions 26-46 form a DNA-binding region, H-T-H motif; the sequence is FDEMKDALDLASKSGIHRLIT. Catalysis depends on for autocatalytic cleavage activity residues S160 and K198.

It belongs to the peptidase S24 family. As to quaternary structure, homodimer.

The enzyme catalyses Hydrolysis of Ala-|-Gly bond in repressor LexA.. Represses a number of genes involved in the response to DNA damage (SOS response), including recA and lexA. In the presence of single-stranded DNA, RecA interacts with LexA causing an autocatalytic cleavage which disrupts the DNA-binding part of LexA, leading to derepression of the SOS regulon and eventually DNA repair. This Agrobacterium fabrum (strain C58 / ATCC 33970) (Agrobacterium tumefaciens (strain C58)) protein is LexA repressor.